Consider the following 167-residue polypeptide: Probable chorismate pyruvate-lyase (167 aa).

R71, I110, and E150 together coordinate substrate.

This sequence belongs to the UbiC family.

Its subcellular location is the cytoplasm. It carries out the reaction chorismate = 4-hydroxybenzoate + pyruvate. It functions in the pathway cofactor biosynthesis; ubiquinone biosynthesis. Its function is as follows. Removes the pyruvyl group from chorismate, with concomitant aromatization of the ring, to provide 4-hydroxybenzoate (4HB) for the ubiquinone pathway. The protein is Probable chorismate pyruvate-lyase of Acinetobacter baylyi (strain ATCC 33305 / BD413 / ADP1).